Consider the following 363-residue polypeptide: Transcription elongation factor, mitochondrial (363 aa).

A mitochondrion-targeting transit peptide spans 1-23; sequence MWIVKGILSSVVLKGHYSLFSRP.

The protein belongs to the TEFM family.

The protein resides in the mitochondrion matrix. The protein localises to the mitochondrion nucleoid. Functionally, transcription elongation factor which increases mitochondrial RNA polymerase processivity. Regulates transcription of the mitochondrial genome, including genes important for the oxidative phosphorylation machinery. In Danio rerio (Zebrafish), this protein is Transcription elongation factor, mitochondrial (tefm).